The following is a 1191-amino-acid chain: Serine/threonine-protein kinase dkf-2 (1191 aa).

Disordered stretches follow at residues 11-48 (YTSMPSSSTSNHRIDRLSSSSSSTFRRDDFRRHSTTTS) and 108-155 (MLSR…GGHV). A compositionally biased stretch (basic and acidic residues) spans 123 to 139 (TPDDHYSNPSDKRREVP). Residues 140 to 150 (SIRSTSSNSSS) show a composition bias toward low complexity. 2 consecutive Phorbol-ester/DAG-type zinc fingers follow at residues 314–364 (PHTL…PNNC) and 466–531 (PHTF…AKDC). The interval 549 to 594 (VSEDRDDDLSLRSGSGGHKKAQNTPSAPLQGSEGSGSPGGAVVSFA) is disordered. Residues 632–713 (LLKEGWIVHY…VYFVYSSLTD (82 aa)) enclose the PH domain. A disordered region spans residues 730-786 (PSTVSSTDSGYLGSSGASSSCVRSREGSTVSSTITVDRTRRGGSTTSTENSEAESES). The segment covering 738 to 751 (SGYLGSSGASSSCV) has biased composition (low complexity). The span at 756–765 (GSTVSSTITV) shows a compositional bias: polar residues. Residues 773–786 (STTSTENSEAESES) show a composition bias toward low complexity. Residues 891 to 1147 (IFAEEVLGSG…VAKAQSHIWM (257 aa)) enclose the Protein kinase domain. Residues 897–905 (LGSGQFGTV) and lysine 920 each bind ATP. The Proton acceptor role is filled by aspartate 1014. A phosphoserine mark is found at serine 1046 and serine 1050.

This sequence belongs to the protein kinase superfamily. CAMK Ser/Thr protein kinase family. PKD subfamily. Requires Mg(2+) as cofactor. Phosphorylation on Ser-1046 is the dominant regulator of catalysis, phosphorylation on Ser-1050 has a lesser effect. Prolonged phosphorylation results in ubiquitination and degradation.

The protein resides in the cytoplasm. It localises to the membrane. The enzyme catalyses L-seryl-[protein] + ATP = O-phospho-L-seryl-[protein] + ADP + H(+). It carries out the reaction L-threonyl-[protein] + ATP = O-phospho-L-threonyl-[protein] + ADP + H(+). Its activity is regulated as follows. Activated by DAG and phorbol esters. Phorbol-ester/DAG-type domain 1 binds phorbol ester with low affinity. Phorbol-ester/DAG-type domain 2 binds phorbol ester with high affinity and targets the kinase to the cell periphery, enabling phosphorylation and activation by colocalized tpa-1. Both domains 1 and 2 appear to bind DAG with equal affinity so may contribute equally to translocation and activation. In terms of biological role, converts transient diacylglycerol (DAG) signals into prolonged physiological effects, downstream of PKC. Acts in the intestine to regulate both innate immunity by promoting activation of pmk-1 and also stress response and life span by acting as an upstream, negative regulator of the daf-16 transcription factor. This is Serine/threonine-protein kinase dkf-2 from Caenorhabditis briggsae.